The following is a 150-amino-acid chain: 3-hydroxyacyl-[acyl-carrier-protein] dehydratase FabZ (150 aa).

His54 is a catalytic residue.

It belongs to the thioester dehydratase family. FabZ subfamily.

It is found in the cytoplasm. The catalysed reaction is a (3R)-hydroxyacyl-[ACP] = a (2E)-enoyl-[ACP] + H2O. Functionally, involved in unsaturated fatty acids biosynthesis. Catalyzes the dehydration of short chain beta-hydroxyacyl-ACPs and long chain saturated and unsaturated beta-hydroxyacyl-ACPs. This is 3-hydroxyacyl-[acyl-carrier-protein] dehydratase FabZ from Vibrio vulnificus (strain CMCP6).